A 125-amino-acid chain; its full sequence is Protein ApaG (125 aa).

In terms of domain architecture, ApaG spans 1-125 (MINSPRVCIQ…FRLAVPTLIH (125 aa)).

The sequence is that of Protein ApaG from Salmonella arizonae (strain ATCC BAA-731 / CDC346-86 / RSK2980).